Reading from the N-terminus, the 181-residue chain is SecB-like chaperone MT2006 (181 aa).

Belongs to the SecB-like family. As to quaternary structure, homotetramer, interacts with antitoxin HigA1.

In terms of biological role, chaperone component of an atypical, type II toxin-antitoxin chaperone (TAC) module, probably required for antitoxin HigA1 to neutralize its cognate toxin HigB1. This Mycobacterium tuberculosis (strain CDC 1551 / Oshkosh) protein is SecB-like chaperone MT2006 (secBL).